Consider the following 67-residue polypeptide: Large ribosomal subunit protein bL31 (67 aa).

Zn(2+) contacts are provided by cysteine 16, cysteine 18, cysteine 36, and cysteine 39.

Belongs to the bacterial ribosomal protein bL31 family. Type A subfamily. Part of the 50S ribosomal subunit. Zn(2+) is required as a cofactor.

In terms of biological role, binds the 23S rRNA. The protein is Large ribosomal subunit protein bL31 of Syntrophomonas wolfei subsp. wolfei (strain DSM 2245B / Goettingen).